A 579-amino-acid polypeptide reads, in one-letter code: Carotenoid-cleaving dioxygenase, mitochondrial (579 aa).

Residues histidine 226, histidine 286, histidine 357, and histidine 573 each coordinate Fe cation.

The protein belongs to the carotenoid oxygenase family. The cofactor is Fe(2+). Highly expressed in retinal pigment epithelium. Also expressed in stomach, small intestine, liver, testis, kidney, adrenal gland, pancreas, heart, skeletal muscle and prostate (at protein level).

It localises to the mitochondrion. It carries out the reaction all-trans-beta-carotene + O2 = beta-ionone + all-trans-10'-apo-beta-carotenal. The catalysed reaction is 5-cis-lycopene + O2 = 5-cis-10'-apo-lycopenal + (3E,5E)-6,10-dimethylundeca-3,5,9-trien-2-one. The enzyme catalyses 13-cis-lycopene + O2 = 13-cis-10'-apo-lycopenal + (3E,5E)-6,10-dimethylundeca-3,5,9-trien-2-one. It catalyses the reaction lutein + O2 = (3R,6R)-hydroxy-alpha-ionone + (3R)-3-hydroxy-10'-apo-beta-carotenal. It carries out the reaction lutein + O2 = (3R,6R)-3-hydroxy-10'-apo-alpha-carotenal + (3R)-hydroxy-beta-ionone. The catalysed reaction is all-trans-zeaxanthin + 2 O2 = 4,9-dimethyldodeca-2,4,6,8,10-pentaenedial + 2 (3R)-hydroxy-beta-ionone. The enzyme catalyses all-trans-zeaxanthin + O2 = (3R)-3-hydroxy-10'-apo-beta-carotenal + (3R)-hydroxy-beta-ionone. It catalyses the reaction beta-cryptoxanthin + O2 = all-trans-10'-apo-beta-carotenal + (3R)-hydroxy-beta-ionone. It carries out the reaction all-trans-10'-apo-beta-carotenal + O2 = beta-ionone + 4,9-dimethyldodeca-2,4,6,8,10-pentaenedial. The catalysed reaction is (3R)-3-hydroxy-10'-apo-beta-carotenal + O2 = 4,9-dimethyldodeca-2,4,6,8,10-pentaenedial + (3R)-hydroxy-beta-ionone. The enzyme catalyses (3R,6R)-3-hydroxy-10'-apo-alpha-carotenal + O2 = (3R,6R)-hydroxy-alpha-ionone + 4,9-dimethyldodeca-2,4,6,8,10-pentaenedial. Broad specificity mitochondrial dioxygenase that mediates the asymmetric oxidative cleavage of carotenoids. Cleaves carotenes (pure hydrocarbon carotenoids) such as all-trans-beta-carotene and lycopene as well as xanthophylls (oxygenated carotenoids) such as zeaxanthin, lutein and beta-cryptoxanthin at both the 9,10 and the 9',10' carbon-carbon double bond. Through its function in carotenoids metabolism regulates oxidative stress and the production of important signaling molecules. This is Carotenoid-cleaving dioxygenase, mitochondrial from Homo sapiens (Human).